We begin with the raw amino-acid sequence, 364 residues long: Aminomethyltransferase (364 aa).

The protein belongs to the GcvT family. As to quaternary structure, the glycine cleavage system is composed of four proteins: P, T, L and H.

The enzyme catalyses N(6)-[(R)-S(8)-aminomethyldihydrolipoyl]-L-lysyl-[protein] + (6S)-5,6,7,8-tetrahydrofolate = N(6)-[(R)-dihydrolipoyl]-L-lysyl-[protein] + (6R)-5,10-methylene-5,6,7,8-tetrahydrofolate + NH4(+). Functionally, the glycine cleavage system catalyzes the degradation of glycine. This is Aminomethyltransferase from Escherichia coli (strain SMS-3-5 / SECEC).